The chain runs to 422 residues: Zinc finger protein Gfi-1 (422 aa).

The interval M1–S20 is SNAG domain. The interval M1–P107 is disordered. Residue S20 is modified to Phosphoserine. Residues A34–A47 show a composition bias toward low complexity. S56 bears the Phosphoserine mark. Residues P57–P72 are compositionally biased toward polar residues. The segment at R140–C257 is required for interaction with RELA. 6 C2H2-type zinc fingers span residues Y255–H278, F284–H306, F312–H334, Y340–H362, H368–H390, and F396–H419.

As to quaternary structure, interacts with U2AF1L4. Component of RCOR-GFI-KDM1A-HDAC complexes. Interacts directly with RCOR1, KDM1A and HDAC2. Also interacts with HDAC1 and HDAC3. Interacts (via the zinc-finger domain) with ARIH2; the interaction prevents GFI1 ubiquitination and proteasomal degradation. Interacts with PIAS3; the interaction relieves the inhibitory effect of PIAS3 on STAT3-mediated transcriptional activity. Forms a complex with EHMT2 and HDAC1 to promote 'Lys-9' dimethylation of H3 (H3K9Me2) and repress expression of target genes. Interacts directly with EHMT2. Component of the GFI1-AJUBA-HDAC1 repressor complex. Interacts directly with AJUBA (via ITS LIM domains); the interaction results in the HDAC-dependent corepression of a subset of GFI1 target genes and, occurs independently of the SNAG domain. Interacts with SPI1; the interaction inhibits SPI1 transcriptional activity targeted at macrophage-specific genes, repressing macrophage differentiation of myeloid progenitor cells and promoting granulocyte commitment. Interacts with RUNX1T1; the interaction represses HDAC-mediated transcriptional activity. Interacts with RELA; the interaction occurs on liposaccharide (LPS) stimulation and controls RELA DNA binding activity and regulates endotoxin-mediated TOLL-like receptor inflammatory response. Interacts (via the C-terminal zinc fingers) with ZBTB17; the interaction results in the recruitment of GFI1 to the CDKN1A/p21 and CDKNIB promoters and repression of transcription. Post-translationally, ubiquitinated.

The protein resides in the nucleus. Transcription repressor essential for hematopoiesis. Functions in a cell-context and development-specific manner. Binds to 5'-TAAATCAC[AT]GCA-3' in the promoter region of a large number of genes. Component of several complexes, including the EHMT2-GFI1-HDAC1, AJUBA-GFI1-HDAC1 and RCOR-GFI-KDM1A-HDAC complexes, that suppress, via histone deacetylase (HDAC) recruitment, a number of genes implicated in multilineage blood cell development. Regulates neutrophil differentiation, promotes proliferation of lymphoid cells, and is required for granulocyte development. Inhibits SPI1 transcriptional activity at macrophage-specific genes, repressing macrophage differentiation of myeloid progenitor cells and promoting granulocyte commitment. Mediates, together with U2AF1L4, the alternative splicing of CD45 and controls T-cell receptor signaling. Regulates the endotoxin-mediated Toll-like receptor (TLR) inflammatory response by antagonizing RELA. Cooperates with CBFA2T2 to regulate ITGB1-dependent neurite growth. Controls cell-cycle progression by repressing CDKNIA/p21 transcription in response to TGFB1 via recruitment of GFI1 by ZBTB17 to the CDKNIA/p21 and CDKNIB promoters. Required for the maintenance of inner ear hair cells. In addition to its role in transcription, acts as a substrate adapter for PRMT1 in the DNA damage response: facilitates the recognition of TP53BP1 and MRE11 substrates by PRMT1, promoting their methylation and the DNA damage response. This chain is Zinc finger protein Gfi-1 (GFI1), found in Canis lupus familiaris (Dog).